A 48-amino-acid chain; its full sequence is Cytochrome c oxidase subunit 2 (48 aa).

At 1–14 (MAHPAQLGLQDASS) the chain is on the mitochondrial intermembrane side. The helical transmembrane segment at 15–45 (PIXEELLHFHEDALMIVFLISTLVLYIITTT) threads the bilayer. Residues 46–48 (VST) are Mitochondrial matrix-facing.

This sequence belongs to the cytochrome c oxidase subunit 2 family. In terms of assembly, component of the cytochrome c oxidase (complex IV, CIV), a multisubunit enzyme composed of 14 subunits. The complex is composed of a catalytic core of 3 subunits MT-CO1, MT-CO2 and MT-CO3, encoded in the mitochondrial DNA, and 11 supernumerary subunits COX4I, COX5A, COX5B, COX6A, COX6B, COX6C, COX7A, COX7B, COX7C, COX8 and NDUFA4, which are encoded in the nuclear genome. The complex exists as a monomer or a dimer and forms supercomplexes (SCs) in the inner mitochondrial membrane with NADH-ubiquinone oxidoreductase (complex I, CI) and ubiquinol-cytochrome c oxidoreductase (cytochrome b-c1 complex, complex III, CIII), resulting in different assemblies (supercomplex SCI(1)III(2)IV(1) and megacomplex MCI(2)III(2)IV(2)). Found in a complex with TMEM177, COA6, COX18, COX20, SCO1 and SCO2. Interacts with TMEM177 in a COX20-dependent manner. Interacts with COX20. Interacts with COX16. Requires Cu cation as cofactor.

It localises to the mitochondrion inner membrane. It carries out the reaction 4 Fe(II)-[cytochrome c] + O2 + 8 H(+)(in) = 4 Fe(III)-[cytochrome c] + 2 H2O + 4 H(+)(out). In terms of biological role, component of the cytochrome c oxidase, the last enzyme in the mitochondrial electron transport chain which drives oxidative phosphorylation. The respiratory chain contains 3 multisubunit complexes succinate dehydrogenase (complex II, CII), ubiquinol-cytochrome c oxidoreductase (cytochrome b-c1 complex, complex III, CIII) and cytochrome c oxidase (complex IV, CIV), that cooperate to transfer electrons derived from NADH and succinate to molecular oxygen, creating an electrochemical gradient over the inner membrane that drives transmembrane transport and the ATP synthase. Cytochrome c oxidase is the component of the respiratory chain that catalyzes the reduction of oxygen to water. Electrons originating from reduced cytochrome c in the intermembrane space (IMS) are transferred via the dinuclear copper A center (CU(A)) of subunit 2 and heme A of subunit 1 to the active site in subunit 1, a binuclear center (BNC) formed by heme A3 and copper B (CU(B)). The BNC reduces molecular oxygen to 2 water molecules using 4 electrons from cytochrome c in the IMS and 4 protons from the mitochondrial matrix. This is Cytochrome c oxidase subunit 2 (mt-co2) from Polypterus sp. (Bichir).